We begin with the raw amino-acid sequence, 953 residues long: Zinc finger CCCH domain-containing protein 18 (953 aa).

M1 is subject to N-acetylmethionine. Basic and acidic residues predominate over residues 1-14 (MDVAESPERDPHSP). Disordered stretches follow at residues 1–222 (MDVA…RPRP) and 391–928 (QYTE…LSRR). Position 6 is a phosphoserine (S6). Residues 15–26 (EDEEQPQGLSDD) show a composition bias toward acidic residues. Phosphoserine occurs at positions 34, 46, 53, 59, 67, 74, 78, 83, and 95. Positions 60 to 72 (QEEEDNHSDEEDR) are enriched in acidic residues. Positions 97-106 (CEEEGDEGEE) are enriched in acidic residues. Positions 105–134 (EEDRTSDLRDEASSVTRELDEHELDYDEEV) form a coiled coil. Residues 107-124 (DRTSDLRDEASSVTRELD) show a composition bias toward basic and acidic residues. A Phosphothreonine modification is found at T109. 2 positions are modified to phosphoserine: S110 and S118. Acidic residues-rich tracts occupy residues 125 to 136 (EHELDYDEEVPE) and 143 to 158 (QEDE…DEEK). The segment covering 159–168 (GEGTPREEGK) has biased composition (basic and acidic residues). Position 162 is a phosphothreonine (T162). Phosphoserine occurs at positions 173 and 179. Residues 175 to 190 (GEKESLEAAKEKKKED) show a composition bias toward basic and acidic residues. Over residues 191 to 207 (DDGEIDDGEIDDDDLEE) the composition is skewed to acidic residues. Residues 208-217 (GEVKDPSDRK) show a composition bias toward basic and acidic residues. Residues 219-245 (RPRPTCRFFMKGNCTWGMNCRFIHPGV) form a C3H1-type zinc finger. A compositionally biased stretch (basic and acidic residues) spans 396–482 (EPYHNYRERE…EKEREKEKGK (87 aa)). Positions 399-464 (HNYRERERER…RERAKRDEKD (66 aa)) form a coiled coil. At S487 the chain carries Phosphoserine. K510 is covalently cross-linked (Glycyl lysine isopeptide (Lys-Gly) (interchain with G-Cter in SUMO2)). Residues 510–520 (KRADEWKDPWR) show a composition bias toward basic and acidic residues. Phosphoserine is present on residues S532, S534, and S536. The segment covering 545 to 606 (SASSASASNS…SRSRSFSSSP (62 aa)) has biased composition (low complexity). Glycyl lysine isopeptide (Lys-Gly) (interchain with G-Cter in SUMO2) cross-links involve residues K622 and K661. Positions 661–670 (KPGDPREARR) are enriched in basic and acidic residues. Composition is skewed to low complexity over residues 692–725 (GSSY…SAHS) and 736–750 (ASPV…PAPA). Basic and acidic residues predominate over residues 760–774 (KKEDGVKEEKRKRDS). A Glycyl lysine isopeptide (Lys-Gly) (interchain with G-Cter in SUMO2) cross-link involves residue K766. A compositionally biased stretch (low complexity) spans 778-798 (PPKSAKPPAGGKSSQQPSTPQ). N6-acetyllysine is present on K814. K817 participates in a covalent cross-link: Glycyl lysine isopeptide (Lys-Gly) (interchain with G-Cter in SUMO2). Residues 824–841 (AADKGSRKRYEPSDKDRQ) show a composition bias toward basic and acidic residues. Phosphoserine is present on residues S842, S852, S868, S893, and S896. A compositionally biased stretch (low complexity) spans 893-906 (SPQSKSSSKVTSVP). K908 participates in a covalent cross-link: Glycyl lysine isopeptide (Lys-Gly) (interchain with G-Cter in SUMO2). Residues 916–925 (STKSGKASTL) are compositionally biased toward polar residues. A coiled-coil region spans residues 921–950 (KASTLSRREELLKQLKAVEDAIARKRAKIP).

As to quaternary structure, interacts with ZFC3H1 in a RNase-insensitive manner.

The protein resides in the nucleus. In Homo sapiens (Human), this protein is Zinc finger CCCH domain-containing protein 18.